Here is a 69-residue protein sequence, read N- to C-terminus: MVPPVQVSPLIKLGRYSALFLGVAYGATRYNYLKPRAEEERRIAAEEKKKQDELKRIARELAEDDSILK.

Lys-34 carries the post-translational modification N6-acetyllysine. A Phosphoserine modification is found at Ser-66.

It belongs to the ATPase e subunit family. Component of the ATP synthase complex composed at least of ATP5F1A/subunit alpha, ATP5F1B/subunit beta, ATP5MC1/subunit c (homooctomer), MT-ATP6/subunit a, MT-ATP8/subunit 8, ATP5ME/subunit e, ATP5MF/subunit f, ATP5MG/subunit g, ATP5MK/subunit k, ATP5MJ/subunit j, ATP5F1C/subunit gamma, ATP5F1D/subunit delta, ATP5F1E/subunit epsilon, ATP5PF/subunit F6, ATP5PB/subunit b, ATP5PD/subunit d, ATP5PO/subunit OSCP. ATP synthase complex consists of a soluble F(1) head domain (subunits alpha(3) and beta(3)) - the catalytic core - and a membrane F(0) domain - the membrane proton channel (subunits c, a, 8, e, f, g, k and j). These two domains are linked by a central stalk (subunits gamma, delta, and epsilon) rotating inside the F1 region and a stationary peripheral stalk (subunits F6, b, d, and OSCP).

Its subcellular location is the mitochondrion. It is found in the mitochondrion inner membrane. In terms of biological role, subunit e, of the mitochondrial membrane ATP synthase complex (F(1)F(0) ATP synthase or Complex V) that produces ATP from ADP in the presence of a proton gradient across the membrane which is generated by electron transport complexes of the respiratory chain. ATP synthase complex consist of a soluble F(1) head domain - the catalytic core - and a membrane F(1) domain - the membrane proton channel. These two domains are linked by a central stalk rotating inside the F(1) region and a stationary peripheral stalk. During catalysis, ATP synthesis in the catalytic domain of F(1) is coupled via a rotary mechanism of the central stalk subunits to proton translocation. In vivo, can only synthesize ATP although its ATP hydrolase activity can be activated artificially in vitro. Part of the complex F(0) domain. This is ATP synthase F(0) complex subunit e, mitochondrial from Homo sapiens (Human).